We begin with the raw amino-acid sequence, 501 residues long: Probable malate:quinone oxidoreductase (501 aa).

This sequence belongs to the MQO family. The cofactor is FAD.

It carries out the reaction (S)-malate + a quinone = a quinol + oxaloacetate. Its pathway is carbohydrate metabolism; tricarboxylic acid cycle; oxaloacetate from (S)-malate (quinone route): step 1/1. The sequence is that of Probable malate:quinone oxidoreductase from Paenarthrobacter aurescens (strain TC1).